Reading from the N-terminus, the 1624-residue chain is MKELSVHVRQQTRALLHKILLKKWRRKRESLLEWSIPIIIGLHMGLFSYLARNIQVLEVPPQDLGSLNEFNGSSLVVVYTPISNITQQIMNKTTFAPTMKGTRIIGVPSIEDLDEVLLHNIPDALGVIFNDSFSYQLKVLRMYGNPFLKEDLLAHCWDTHSQAFCSLSKYWERGFVALQTAINAGIIEVTTNHSVMEELMSIDGINMKTLPFIPRDLSDYEIFILFCLLYFSSFIYFASSNVTKERKQCKEVMKVMGLQDSAFWLSWGLIYVGFIFIISIFIAIIITSTQIIMMTGFLVIFTLFFLYGLSLIAVTFLMAVLLQKAVLTNLIVLFFTLFWGCVGFTVLHKELPPSLEWVLSIFSPFAFTSGMAKVIFQDYNLNGVVFPDPSGESYVMIAVFFILAFDSLLYLVLALYFDKILLYGAEHRSAPLFFLNPTSCFRKTANRNKVIERDLDPELPSDEYFEPVDPEYQGKEAIRIRNIKKEYKGKSGKVKALKGLFLDIYESQITAILGHSGAGKSSLLNILSGLYVPTAGSVTVYNKNLSDMQDLKEIRKAIGVCPQHNVQFDALTVKENLTLFAKIKGILPQDVEQEVQQILSELDMQNIRDDLAEHLSEGQKRKLTFGIATVGDPQILLLDEPTVGLDPFSRQRIWGFLKERRADHVILFSTQFMDEADILADRKVLIANGALKCTGSSVFLKRKWGLGYHLSLFMDETCDSERLTSFINHHIPYAKLKAKTKEKLVYILPLERTSEFPEFFSDLDKYSGQGLMSYEVSMSTLNDVFLNLEGEPSTKQDFEKRETATDSESLNDMEVAYPSLSQVQETVSTMSLWRMQVCAIARLRILKLKRERKAFLIILLLLGIALLPLVIEYVANALLEVKNNWEFKTDLYFLSPGQLPQGLRTSLLVINNTESNIEDFLQSLKHQNIVLEVDDFENRNATNSLSYNGAIIVSGRQKDYRFSAVCNTKRLHCFPILMNVISNGILHMLNHTQYIRIKEDIFSPFIVLVWTGIQETCLFILCVICSLSPHIAMSSVSDYKKKADSQLWISGLYPSAYWCGQAVVDISLFSGMLLTSYFTSYTSKLLNIDMTSEIVFSVIVLALGCAASLVFLTYVISFVFGKRKKNSTLWSICFLLVIAITFEKVANGPFNEALVISATMLVPSFALNGLLVVLEMRAYQYYIEFEEIKHGLSAVDLLLCLIPYIHTLLFIFVLRCLELKYGKNVVRRDPIFRIAPQSLKAQPNPEEPIDEDENVQAERLRTSDALSTPNLDEKPVIIASCLHKEYAGQKKHCCSRRTRNMAVRNVSFCVNKGEILGLLGPDGAGKSSSIRMIAGITKPTAGQVELKRLSSAVGHQGDSRAEFGYCPQENGLWPNLTVKEHLELYAAVKGLRKEDAVVAISRLVNALKLHDQLNVQVQNLVAGATRKLCFVLSILGNSPVLILDEPSTGLDVSGKHQVWQAIQAVVKDNEKGVLLSTHDLAEAEALCDRAAIMVSGRLRCIGPIQHLKRKFGQDYVLELRVKDVSQEPLVHREILKLFPQAARQDRCFSLLTYKLPVTDVHPLSQAFHKLEAVKHGFDLEDYSLSQCTLDRVILELSKEQELGTVYEEADMTLGRKLLPPSDEL.

A helical membrane pass occupies residues 31–51; sequence LLEWSIPIIIGLHMGLFSYLA. N-linked (GlcNAc...) asparagine glycans are attached at residues Asn-84 and Asn-91. The next 6 helical transmembrane spans lie at 222–242, 267–287, 297–317, 326–346, 356–376, and 395–415; these read IFIL…SSNV, WGLI…IIIT, FLVI…VTFL, VLTN…GFTV, EWVL…KVIF, and VMIA…VLAL. Positions 478 to 713 constitute an ABC transporter 1 domain; the sequence is IRIRNIKKEY…WGLGYHLSLF (236 aa). 514–521 serves as a coordination point for ATP; the sequence is GHSGAGKS. A glycan (N-linked (GlcNAc...) asparagine) is linked at Asn-576. The next 8 membrane-spanning stretches (helical) occupy residues 854–874, 971–991, 1005–1025, 1058–1078, 1094–1114, 1130–1150, 1154–1174, and 1194–1214; these read AFLI…IEYV, LHCF…MLNH, FIVL…CVIC, WCGQ…TSYF, IVFS…FLTY, WSIC…NGPF, LVIS…LVVL, and AVDL…IFVL. Residues 1282 to 1520 form the ABC transporter 2 domain; sequence LHKEYAGQKK…FGQDYVLELR (239 aa). 1320–1327 contacts ATP; sequence GPDGAGKS.

The protein belongs to the ABC transporter superfamily. ABCA family. Widely expressed with higher expression in heart, lung, brain, spleen and testis.

Its subcellular location is the golgi apparatus membrane. Functionally, probable transporter which may play a role in macrophage lipid transport and homeostasis. The polypeptide is ATP-binding cassette sub-family A member 6 (Abca6) (Mus musculus (Mouse)).